The primary structure comprises 338 residues: Inorganic pyrophosphatase (338 aa).

Arg-129 is a binding site for diphosphate. Positions 166, 171, and 203 each coordinate Mg(2+).

The protein belongs to the PPase family. Component of the NURF complex composed of Caf1-55, E(bx), Nurf-38 and Iswi. Mg(2+) serves as cofactor.

It localises to the cytoplasm. The protein localises to the nucleus. The enzyme catalyses diphosphate + H2O = 2 phosphate + H(+). Component of NURF (nucleosome remodeling factor), a complex which catalyzes ATP-dependent nucleosome sliding and facilitates transcription of chromatin. NURF is required for homeotic gene expression, proper larval blood cell development, normal male X chromosome morphology, ecdysteroid signaling and metamorphosis. Inorganic pyrophosphatase (PPase), hydrolyzes inorganic pyrophosphate to inorganic phosphate, essential for driving critical biosynthetic reactions including transcription, replication, and DNA repair. The protein is Inorganic pyrophosphatase (Nurf-38) of Drosophila melanogaster (Fruit fly).